Consider the following 483-residue polypeptide: UDP-N-acetylmuramoylalanine--D-glutamate ligase (483 aa).

119-125 (GTNGKTT) is an ATP binding site.

The protein belongs to the MurCDEF family.

The protein localises to the cytoplasm. The enzyme catalyses UDP-N-acetyl-alpha-D-muramoyl-L-alanine + D-glutamate + ATP = UDP-N-acetyl-alpha-D-muramoyl-L-alanyl-D-glutamate + ADP + phosphate + H(+). The protein operates within cell wall biogenesis; peptidoglycan biosynthesis. In terms of biological role, cell wall formation. Catalyzes the addition of glutamate to the nucleotide precursor UDP-N-acetylmuramoyl-L-alanine (UMA). This chain is UDP-N-acetylmuramoylalanine--D-glutamate ligase, found in Mycolicibacterium vanbaalenii (strain DSM 7251 / JCM 13017 / BCRC 16820 / KCTC 9966 / NRRL B-24157 / PYR-1) (Mycobacterium vanbaalenii).